The chain runs to 578 residues: Cyclin-SDS (578 aa).

A disordered region spans residues 1 to 31; it reads MKEIAMRNSKRKPEPTPFAGKKLRSTRLRRK. Over residues 21 to 31 the composition is skewed to basic residues; it reads KKLRSTRLRRK.

The protein belongs to the cyclin family. In terms of assembly, may interact with CDKA-1 and CDKB1-1.

In terms of biological role, meiosis-specific cyclin. Required for normal homolog synapsis and recombination in early to mid-prophase 1. May regulate the timing of sister chromatid separation. The chain is Cyclin-SDS (SDS) from Arabidopsis thaliana (Mouse-ear cress).